The chain runs to 233 residues: Large ribosomal subunit protein uL1 (233 aa).

Belongs to the universal ribosomal protein uL1 family. In terms of assembly, part of the 50S ribosomal subunit.

In terms of biological role, binds directly to 23S rRNA. The L1 stalk is quite mobile in the ribosome, and is involved in E site tRNA release. Functionally, protein L1 is also a translational repressor protein, it controls the translation of the L11 operon by binding to its mRNA. This is Large ribosomal subunit protein uL1 from Pseudoalteromonas atlantica (strain T6c / ATCC BAA-1087).